Consider the following 124-residue polypeptide: Glucagon-1 (124 aa).

The signal sequence occupies residues 1-25 (MKRIHSLAGILLVLGLIQSSCRVLM). Residues 28–54 (ADPSSSLEADSTLKDEPRELSNMKRHS) form a disordered region. Over residues 38–54 (STLKDEPRELSNMKRHS) the composition is skewed to basic and acidic residues. The propeptide occupies 84 to 88 (SGVAE).

Belongs to the glucagon family.

It localises to the secreted. Its function is as follows. Glucagon plays a key role in glucose metabolism and homeostasis. Regulates blood glucose by increasing gluconeogenesis and decreasing glycolysis. The chain is Glucagon-1 (gcg1) from Lophius americanus (American angler).